A 75-amino-acid polypeptide reads, in one-letter code: SPbeta prophage-derived uncharacterized protein YomT (75 aa).

The protein is SPbeta prophage-derived uncharacterized protein YomT (yomT) of Bacillus subtilis (strain 168).